The chain runs to 88 residues: UPF0297 protein YrzL (88 aa).

It belongs to the UPF0297 family.

The sequence is that of UPF0297 protein YrzL (yrzL) from Bacillus subtilis (strain 168).